Reading from the N-terminus, the 256-residue chain is UPF0259 membrane protein YPO2199/y2042/YP_1997 (256 aa).

The next 6 helical transmembrane spans lie at 20–40 (IAAI…LNQT), 90–110 (FSAL…IAMV), 118–138 (ALQA…LMFI), 141–161 (LVIQ…AIAL), 192–212 (LIVP…FLIS), and 221–241 (IATI…LVYL).

It belongs to the UPF0259 family.

It is found in the cell inner membrane. In Yersinia pestis, this protein is UPF0259 membrane protein YPO2199/y2042/YP_1997.